We begin with the raw amino-acid sequence, 315 residues long: Histone-lysine N-methyltransferase SETMAR (315 aa).

One can recognise a Pre-SET domain in the interval 74–137 (PGCACIKTPC…HCRNRVVQSG (64 aa)). Residues C76, C78, C83, C88, C90, C119, C123, C125, and C129 each coordinate Zn(2+). Residues 140–264 (FLLQVFQTEK…PGEELSYDYS (125 aa)) enclose the SET domain. Residues 150-152 (KGW), Y193, R221, and 224-225 (NH) contribute to the S-adenosyl-L-methionine site. Zn(2+)-binding residues include C227, C288, C290, and C295. The 17-residue stretch at 284-300 (PRKPCYCGAQSCATFLP) folds into the Post-SET domain.

This sequence belongs to the class V-like SAM-binding methyltransferase superfamily.

The protein localises to the nucleus. It localises to the chromosome. It carries out the reaction L-lysyl(36)-[histone H3] + 2 S-adenosyl-L-methionine = N(6),N(6)-dimethyl-L-lysyl(36)-[histone H3] + 2 S-adenosyl-L-homocysteine + 2 H(+). Functionally, histone methyltransferase that methylates 'Lys-4' and 'Lys-36' of histone H3, 2 specific tags for epigenetic transcriptional activation. Specifically mediates dimethylation of H3 'Lys-36'. This Rattus norvegicus (Rat) protein is Histone-lysine N-methyltransferase SETMAR.